We begin with the raw amino-acid sequence, 110 residues long: Putative membrane protein insertion efficiency factor (110 aa).

It belongs to the UPF0161 family.

The protein localises to the cell inner membrane. In terms of biological role, could be involved in insertion of integral membrane proteins into the membrane. This Campylobacter hominis (strain ATCC BAA-381 / DSM 21671 / CCUG 45161 / LMG 19568 / NCTC 13146 / CH001A) protein is Putative membrane protein insertion efficiency factor.